A 655-amino-acid polypeptide reads, in one-letter code: Chaperone protein DnaK 3 (655 aa).

At Thr197 the chain carries Phosphothreonine; by autocatalysis.

It belongs to the heat shock protein 70 family.

Its function is as follows. Acts as a chaperone. This Synechococcus sp. (strain ATCC 27144 / PCC 6301 / SAUG 1402/1) (Anacystis nidulans) protein is Chaperone protein DnaK 3.